Consider the following 143-residue polypeptide: Pre-mRNA-splicing factor U5-Cwc21 (143 aa).

A CWF21 domain is found at 27–70 (EHHRSLRAIKLKVLLYREEREAAGVPPDVISRECATLHGSLLRN).

It belongs to the CWC21 family. Associates with the NTC complex (or PRP19-associated complex). The NTC complex associates with the spliceosome after the release of the U1 and U4 snRNAs and forms the CWC spliceosome subcomplex reminiscent of a late-stage spliceosome. Associates specifically with U5-containing snRNPs.

Its subcellular location is the cytoplasm. The protein resides in the nucleus. Essential protein involved in pre-mRNA cis- and trans-splicing. May function at or prior to the first catalytic step of splicing at the catalytic center of the spliceosome. May do so by stabilizing the catalytic center or the position of the RNA substrate. This chain is Pre-mRNA-splicing factor U5-Cwc21, found in Trypanosoma brucei brucei (strain 927/4 GUTat10.1).